The following is a 258-amino-acid chain: C1q-related factor (258 aa).

Residues 1–16 (MLLVLVVLIPVLVSSG) form the signal peptide. A disordered region spans residues 39-120 (GPGAGARSDG…PGSGGSGAIS (82 aa)). A compositionally biased stretch (low complexity) spans 67–77 (GPQGKPGRTGK). The region spanning 67-115 (GPQGKPGRTGKPGPPGPPGDRGPPGPVGPPGEKGEPGKPGPPGLPGSGG) is the Collagen-like domain. Positions 78-95 (PGPPGPPGDRGPPGPVGP) are enriched in pro residues. The C1q domain occupies 125–258 (TTVPRVAFYA…TFSGFIIYSD (134 aa)).

Interacts with ADGRB3. Forms heterooligomers with C1QL4, when proteins are coexpressed; this interaction does not occur after secretion. In terms of tissue distribution, expressed in brainstem. More abundant in areas of the nervous system involved in motor function, such as the Purkinje cells of the cerebellum, the accessory olivary nucleus, the pons and the red nucleus.

Its subcellular location is the secreted. Functionally, may regulate the number of excitatory synapses that are formed on hippocampus neurons. Has no effect on inhibitory synapses. In Mus musculus (Mouse), this protein is C1q-related factor (C1ql1).